Consider the following 81-residue polypeptide: Photosystem I iron-sulfur center (81 aa).

4Fe-4S ferredoxin-type domains are found at residues 2–31 and 37–68; these read AHTV…MVPW and GQIA…IRVY. The [4Fe-4S] cluster site is built by cysteine 11, cysteine 14, cysteine 17, cysteine 21, cysteine 48, cysteine 51, cysteine 54, and cysteine 58.

In terms of assembly, the cyanobacterial PSI reaction center is composed of one copy each of PsaA,B,C,D,E,F,I,J,K,L,M and X, and forms trimeric complexes. The cofactor is [4Fe-4S] cluster.

The protein resides in the cellular thylakoid membrane. It catalyses the reaction reduced [plastocyanin] + hnu + oxidized [2Fe-2S]-[ferredoxin] = oxidized [plastocyanin] + reduced [2Fe-2S]-[ferredoxin]. In terms of biological role, apoprotein for the two 4Fe-4S centers FA and FB of photosystem I (PSI); essential for photochemical activity. FB is the terminal electron acceptor of PSI, donating electrons to ferredoxin. The C-terminus interacts with PsaA/B/D and helps assemble the protein into the PSI complex. Required for binding of PsaD and PsaE to PSI. PSI is a plastocyanin/cytochrome c6-ferredoxin oxidoreductase, converting photonic excitation into a charge separation, which transfers an electron from the donor P700 chlorophyll pair to the spectroscopically characterized acceptors A0, A1, FX, FA and FB in turn. The polypeptide is Photosystem I iron-sulfur center (psaC) (Synechococcus elongatus).